The following is a 404-amino-acid chain: Druantia protein DruA (404 aa).

The protein localises to the cytoplasm. In terms of biological role, component of antiviral defense system Druantia type I, composed of DruA, DruB, DruC, DruD and DruE. Expression of Druantia in E.coli (strain MG1655) confers resistance to phage lambda, SECphi18, SECphi27 and T4. The polypeptide is Druantia protein DruA (Escherichia coli (strain UMEA 4076-1)).